A 468-amino-acid chain; its full sequence is Cytochrome bd ubiquinol oxidase subunit 1 (468 aa).

Transmembrane regions (helical) follow at residues 15–35, 51–71, 95–115, 124–144, 177–197, 219–239, 331–351, 366–386, and 416–436; these read TLFHFLFVPMSIGLVFMVALM, AKFWGHLFLINFAVGVVTGIL, LAIEALLAFFMESIFIGLWIF, IHALCIWLVSFGTIMSSFWIL, LWVEFPHVIFGALATGAFFIA, LAMIVGLCAGLGVGLSGHMQA, FRIMVGAGVVMILAALGGLWL, IMIALISFPFLANSAGWIMTE, and SIIAFGVMYMILGALLVFLFI. Heme b is bound at residue histidine 18. Position 183 (histidine 183) interacts with heme b. Methionine 334 is a binding site for heme b. A disordered region spans residues 448-468; it reads HHDVPVSTDPFSQEVYHGISS.

It belongs to the cytochrome ubiquinol oxidase subunit 1 family. Heterodimer of subunits I and II. The cofactor is heme b. Heme d cis-diol serves as cofactor.

The protein resides in the cell membrane. It catalyses the reaction 2 a ubiquinol + O2(in) + 4 H(+)(in) = 2 a ubiquinone + 2 H2O(in) + 4 H(+)(out). This chain is Cytochrome bd ubiquinol oxidase subunit 1 (cydA), found in Bacillus subtilis (strain 168).